A 439-amino-acid polypeptide reads, in one-letter code: uncharacterized protein (439 aa).

Residues 65–208 (TRPKRVFVLV…VYAFELTTEG (144 aa)) form the DAGKc domain.

This is an uncharacterized protein from Caenorhabditis elegans.